The following is a 207-amino-acid chain: Uridine kinase (207 aa).

Position 11–18 (11–18 (GGSGSGKT)) interacts with ATP.

It belongs to the uridine kinase family.

The protein localises to the cytoplasm. It carries out the reaction uridine + ATP = UMP + ADP + H(+). The catalysed reaction is cytidine + ATP = CMP + ADP + H(+). Its pathway is pyrimidine metabolism; CTP biosynthesis via salvage pathway; CTP from cytidine: step 1/3. The protein operates within pyrimidine metabolism; UMP biosynthesis via salvage pathway; UMP from uridine: step 1/1. The sequence is that of Uridine kinase from Staphylococcus epidermidis (strain ATCC 35984 / DSM 28319 / BCRC 17069 / CCUG 31568 / BM 3577 / RP62A).